Here is a 394-residue protein sequence, read N- to C-terminus: 8-amino-7-oxononanoate synthase (394 aa).

Arginine 21 serves as a coordination point for substrate. 112–113 (GY) contributes to the pyridoxal 5'-phosphate binding site. Histidine 137 contacts substrate. Pyridoxal 5'-phosphate-binding residues include serine 183, histidine 211, and threonine 239. Residue lysine 242 is modified to N6-(pyridoxal phosphate)lysine. Threonine 358 lines the substrate pocket.

Belongs to the class-II pyridoxal-phosphate-dependent aminotransferase family. BioF subfamily. Homodimer. Requires pyridoxal 5'-phosphate as cofactor.

The enzyme catalyses 6-carboxyhexanoyl-[ACP] + L-alanine + H(+) = (8S)-8-amino-7-oxononanoate + holo-[ACP] + CO2. It participates in cofactor biosynthesis; biotin biosynthesis. Its function is as follows. Catalyzes the decarboxylative condensation of pimeloyl-[acyl-carrier protein] and L-alanine to produce 8-amino-7-oxononanoate (AON), [acyl-carrier protein], and carbon dioxide. The polypeptide is 8-amino-7-oxononanoate synthase (Paraburkholderia xenovorans (strain LB400)).